A 230-amino-acid chain; its full sequence is UPF0173 metal-dependent hydrolase Dshi_2788 (230 aa).

This sequence belongs to the UPF0173 family.

The chain is UPF0173 metal-dependent hydrolase Dshi_2788 from Dinoroseobacter shibae (strain DSM 16493 / NCIMB 14021 / DFL 12).